Reading from the N-terminus, the 99-residue chain is Plastocyanin A'/A'' (99 aa).

In terms of domain architecture, Plastocyanin-like spans I1–N99. Positions 37, 84, 87, and 92 each coordinate Cu cation.

It belongs to the plastocyanin family. It depends on Cu(2+) as a cofactor.

It localises to the plastid. Its subcellular location is the chloroplast thylakoid membrane. Participates in electron transfer between P700 and the cytochrome b6-f complex in photosystem I. This chain is Plastocyanin A'/A'', found in Nicotiana tabacum (Common tobacco).